Consider the following 792-residue polypeptide: Vicilin Car i 2.0101 (792 aa).

Positions 1–26 (MVTKAKIPLFLFLSALFLALVCSSLA) are cleaved as a signal peptide. Disordered regions lie at residues 132–153 (ERRERRRGRDDDDKENPRDPRE), 182–217 (RFEEEQRRQEERERRRGRDNDDEENPRDPREQYRQC), 240–272 (ERLEEEQRKQEERERRRGRDEDDQNPRDPEQRY), 302–325 (EERERQRGRDRQDPQQQYHRCQRR), and 350–394 (QQGR…ESGE). 2 stretches are compositionally biased toward basic and acidic residues: residues 182–200 (RFEEEQRRQEERERRRGRD) and 207–217 (PRDPREQYRQC). Residues 302 to 314 (EERERQRGRDRQD) show a composition bias toward basic and acidic residues. The segment covering 315–325 (PQQQYHRCQRR) has biased composition (low complexity). Over residues 350–375 (QQGREWGPDQASPRRESRGREEEQQR) the composition is skewed to basic and acidic residues. Y379 lines the Cu cation pocket. Cupin type-1 domains are found at residues 384 to 537 (QGLR…DRLE) and 582 to 754 (ISLK…EEIE). The Cu cation site is built by C652, H654, and H698. The stretch at 727–754 (LAGQNNIINQLEREAKELSFNMPREEIE) forms a coiled coil.

This sequence belongs to the 7S seed storage protein family. As to quaternary structure, homotrimer. As to expression, expressed in seed (at protein level). Expressed in seed.

In terms of biological role, seed storage protein. This chain is Vicilin Car i 2.0101, found in Carya illinoinensis (Pecan).